Here is a 132-residue protein sequence, read N- to C-terminus: MIEPFLGTWKLISSENFENYVRELGVECEPRKVACLIKPSVSISFNGERMDIQAGSACRNTEISFKLGEEFEETTADNRKVKSLITFEGGSMIQVQKWLGKQTTIKRKIVDGKMVVECTMNNVVSTRIYERV.

6 positions are modified to phosphoserine: serine 13, serine 14, serine 40, serine 42, serine 44, and serine 91.

Belongs to the calycin superfamily. Fatty-acid binding protein (FABP) family. Testis.

It localises to the cytoplasm. The protein is Fatty acid-binding protein 9 (Fabp9) of Mus musculus (Mouse).